Reading from the N-terminus, the 340-residue chain is Delta(1)-pyrroline-2-carboxylate reductase 1 (340 aa).

Residue Ser50 is the Charge relay system of the active site. Catalysis depends on His51, which acts as the Proton donor. Arg55 is a binding site for substrate. 123 to 127 is an NADP(+) binding site; sequence HFSAL. Thr163 is a substrate binding site. 181 to 183 lines the NADP(+) pocket; that stretch reads DFA. 189–190 contributes to the substrate binding site; that stretch reads RG. Residue Asp191 is the Charge relay system of the active site. NADP(+) is bound by residues 232–233 and 307–313; these read HK and RLPSQRR.

It belongs to the LDH2/MDH2 oxidoreductase family. In terms of assembly, homodimer.

The enzyme catalyses L-proline + NAD(+) = 1-pyrroline-2-carboxylate + NADH + H(+). It catalyses the reaction L-proline + NADP(+) = 1-pyrroline-2-carboxylate + NADPH + H(+). In terms of biological role, catalyzes the reduction of Delta(1)-pyrroline-2-carboxylate (Pyr2C) to L-proline, using NADPH as the electron donor. May be involved in a degradation pathway that converts trans-3-hydroxy-L-proline (t3LHyp) to L-proline. In Burkholderia ambifaria (strain ATCC BAA-244 / DSM 16087 / CCUG 44356 / LMG 19182 / AMMD) (Burkholderia cepacia (strain AMMD)), this protein is Delta(1)-pyrroline-2-carboxylate reductase 1.